Here is a 941-residue protein sequence, read N- to C-terminus: Isoleucine--tRNA ligase (941 aa).

A 'HIGH' region motif is present at residues 58 to 68; it reads PYANGNIHIGH. Glutamate 564 contributes to the L-isoleucyl-5'-AMP binding site. The short motif at 605 to 609 is the 'KMSKS' region element; sequence KMSKS. Lysine 608 provides a ligand contact to ATP. Cysteine 904, cysteine 907, cysteine 924, and cysteine 927 together coordinate Zn(2+).

It belongs to the class-I aminoacyl-tRNA synthetase family. IleS type 1 subfamily. In terms of assembly, monomer. Requires Zn(2+) as cofactor.

The protein localises to the cytoplasm. The catalysed reaction is tRNA(Ile) + L-isoleucine + ATP = L-isoleucyl-tRNA(Ile) + AMP + diphosphate. In terms of biological role, catalyzes the attachment of isoleucine to tRNA(Ile). As IleRS can inadvertently accommodate and process structurally similar amino acids such as valine, to avoid such errors it has two additional distinct tRNA(Ile)-dependent editing activities. One activity is designated as 'pretransfer' editing and involves the hydrolysis of activated Val-AMP. The other activity is designated 'posttransfer' editing and involves deacylation of mischarged Val-tRNA(Ile). The chain is Isoleucine--tRNA ligase from Buchnera aphidicola subsp. Cinara cedri (strain Cc).